A 180-amino-acid polypeptide reads, in one-letter code: Crossover junction endodeoxyribonuclease RuvC (180 aa).

Active-site residues include Asp7, Glu66, and Asp138. Mg(2+)-binding residues include Asp7, Glu66, and Asp138.

It belongs to the RuvC family. As to quaternary structure, homodimer which binds Holliday junction (HJ) DNA. The HJ becomes 2-fold symmetrical on binding to RuvC with unstacked arms; it has a different conformation from HJ DNA in complex with RuvA. In the full resolvosome a probable DNA-RuvA(4)-RuvB(12)-RuvC(2) complex forms which resolves the HJ. Mg(2+) serves as cofactor.

It is found in the cytoplasm. The catalysed reaction is Endonucleolytic cleavage at a junction such as a reciprocal single-stranded crossover between two homologous DNA duplexes (Holliday junction).. Its function is as follows. The RuvA-RuvB-RuvC complex processes Holliday junction (HJ) DNA during genetic recombination and DNA repair. Endonuclease that resolves HJ intermediates. Cleaves cruciform DNA by making single-stranded nicks across the HJ at symmetrical positions within the homologous arms, yielding a 5'-phosphate and a 3'-hydroxyl group; requires a central core of homology in the junction. The consensus cleavage sequence is 5'-(A/T)TT(C/G)-3'. Cleavage occurs on the 3'-side of the TT dinucleotide at the point of strand exchange. HJ branch migration catalyzed by RuvA-RuvB allows RuvC to scan DNA until it finds its consensus sequence, where it cleaves and resolves the cruciform DNA. This is Crossover junction endodeoxyribonuclease RuvC from Burkholderia thailandensis (strain ATCC 700388 / DSM 13276 / CCUG 48851 / CIP 106301 / E264).